We begin with the raw amino-acid sequence, 227 residues long: dTTP/UTP pyrophosphatase (227 aa).

Asp-98 (proton acceptor) is an active-site residue.

The protein belongs to the Maf family. YhdE subfamily. The cofactor is a divalent metal cation.

Its subcellular location is the cytoplasm. The catalysed reaction is dTTP + H2O = dTMP + diphosphate + H(+). It carries out the reaction UTP + H2O = UMP + diphosphate + H(+). Its function is as follows. Nucleoside triphosphate pyrophosphatase that hydrolyzes dTTP and UTP. May have a dual role in cell division arrest and in preventing the incorporation of modified nucleotides into cellular nucleic acids. The polypeptide is dTTP/UTP pyrophosphatase (Bartonella quintana (strain Toulouse) (Rochalimaea quintana)).